The sequence spans 292 residues: Probable alpha-L-glutamate ligase (292 aa).

An ATP-grasp domain is found at 104-287; that stretch reads HQLLAAKGID…VATRIIEHVE (184 aa). ATP is bound by residues K141, 178–179, D187, and 211–213; these read EF and RSN. 3 residues coordinate Mg(2+): D248, E260, and N262. D248, E260, and N262 together coordinate Mn(2+).

The protein belongs to the RimK family. Requires Mg(2+) as cofactor. Mn(2+) serves as cofactor.

In Stenotrophomonas maltophilia (strain K279a), this protein is Probable alpha-L-glutamate ligase.